Reading from the N-terminus, the 418-residue chain is Coenzyme A biosynthesis bifunctional protein CoaBC (418 aa).

A phosphopantothenoylcysteine decarboxylase region spans residues M1 to K195. The segment at L196–S418 is phosphopantothenate--cysteine ligase. Residues D285, K295, F336, K354, and K358 each coordinate CTP.

It in the N-terminal section; belongs to the HFCD (homo-oligomeric flavin containing Cys decarboxylase) superfamily. This sequence in the C-terminal section; belongs to the PPC synthetase family. The cofactor is Mg(2+). FMN is required as a cofactor.

The enzyme catalyses N-[(R)-4-phosphopantothenoyl]-L-cysteine + H(+) = (R)-4'-phosphopantetheine + CO2. It carries out the reaction (R)-4'-phosphopantothenate + L-cysteine + CTP = N-[(R)-4-phosphopantothenoyl]-L-cysteine + CMP + diphosphate + H(+). It participates in cofactor biosynthesis; coenzyme A biosynthesis; CoA from (R)-pantothenate: step 2/5. It functions in the pathway cofactor biosynthesis; coenzyme A biosynthesis; CoA from (R)-pantothenate: step 3/5. Its function is as follows. Catalyzes two sequential steps in the biosynthesis of coenzyme A. In the first step cysteine is conjugated to 4'-phosphopantothenate to form 4-phosphopantothenoylcysteine. In the second step the latter compound is decarboxylated to form 4'-phosphopantotheine. This is Coenzyme A biosynthesis bifunctional protein CoaBC from Mycobacterium bovis (strain ATCC BAA-935 / AF2122/97).